The primary structure comprises 190 residues: Secreted isochorismatase effector Isc1 (190 aa).

Active-site residues include Asp26, Lys100, and Cys133.

It belongs to the isochorismatase family.

Its subcellular location is the secreted. It localises to the host cytoplasm. It is found in the host nucleus. The catalysed reaction is isochorismate + H2O = (2S,3S)-2,3-dihydroxy-2,3-dihydrobenzoate + pyruvate. Its function is as follows. Secreted isochorismatase required for full virulence of V.dahliae. Suppresses salicylate-mediated innate immunity of the host by disrupting the plant salicylate metabolism pathway via hydrolysis of its isochorismate precursor. In Verticillium dahliae (strain VdLs.17 / ATCC MYA-4575 / FGSC 10137) (Verticillium wilt), this protein is Secreted isochorismatase effector Isc1.